Consider the following 176-residue polypeptide: Macro domain-containing protein LMOf2365_2748 (176 aa).

One can recognise a Macro domain in the interval 1–175; sequence MEITVVKGDI…LYNKLINSEV (175 aa).

Belongs to the MacroD-type family.

This is Macro domain-containing protein LMOf2365_2748 from Listeria monocytogenes serotype 4b (strain F2365).